Here is a 409-residue protein sequence, read N- to C-terminus: uncharacterized protein (409 aa).

Positions 1 to 29 are cleaved as a signal peptide; the sequence is MARSRCVHRVVHQAACIGVIGLSTSALTT. C30 carries N-palmitoyl cysteine lipidation. The S-diacylglycerol cysteine moiety is linked to residue C30.

It belongs to the TP013X lipoprotein family.

Its subcellular location is the cell membrane. This is an uncharacterized protein from Treponema pallidum (strain Nichols).